The primary structure comprises 484 residues: Glutamyl-tRNA(Gln) amidotransferase subunit A (484 aa).

Catalysis depends on charge relay system residues Lys77 and Ser152. Residue Ser176 is the Acyl-ester intermediate of the active site.

It belongs to the amidase family. GatA subfamily. As to quaternary structure, heterotrimer of A, B and C subunits.

It catalyses the reaction L-glutamyl-tRNA(Gln) + L-glutamine + ATP + H2O = L-glutaminyl-tRNA(Gln) + L-glutamate + ADP + phosphate + H(+). Allows the formation of correctly charged Gln-tRNA(Gln) through the transamidation of misacylated Glu-tRNA(Gln) in organisms which lack glutaminyl-tRNA synthetase. The reaction takes place in the presence of glutamine and ATP through an activated gamma-phospho-Glu-tRNA(Gln). In Lacticaseibacillus casei (strain BL23) (Lactobacillus casei), this protein is Glutamyl-tRNA(Gln) amidotransferase subunit A.